We begin with the raw amino-acid sequence, 689 residues long: DNA ligase (689 aa).

NAD(+) contacts are provided by residues 51–55 (DSEYD), 100–101 (SL), and Glu129. Lys131 functions as the N6-AMP-lysine intermediate in the catalytic mechanism. NAD(+) contacts are provided by Arg152, Glu189, Lys308, and Lys332. Residues Cys426, Cys429, Cys444, and Cys450 each coordinate Zn(2+). One can recognise a BRCT domain in the interval 609 to 689 (ADEQPLKGQT…ELLALLAANS (81 aa)).

It belongs to the NAD-dependent DNA ligase family. LigA subfamily. Requires Mg(2+) as cofactor. Mn(2+) is required as a cofactor.

The catalysed reaction is NAD(+) + (deoxyribonucleotide)n-3'-hydroxyl + 5'-phospho-(deoxyribonucleotide)m = (deoxyribonucleotide)n+m + AMP + beta-nicotinamide D-nucleotide.. DNA ligase that catalyzes the formation of phosphodiester linkages between 5'-phosphoryl and 3'-hydroxyl groups in double-stranded DNA using NAD as a coenzyme and as the energy source for the reaction. It is essential for DNA replication and repair of damaged DNA. The chain is DNA ligase from Shewanella sp. (strain ANA-3).